The chain runs to 372 residues: N-methyl-L-tryptophan oxidase (372 aa).

4-34 serves as a coordination point for FAD; that stretch reads DLIIIGSGSVGAAAGYYATRAGLKVLMTDAH. At Cys307 the chain carries S-8alpha-FAD cysteine.

Belongs to the MSOX/MTOX family. MTOX subfamily. In terms of assembly, monomer. FAD is required as a cofactor.

The enzyme catalyses N(alpha)-methyl-L-tryptophan + O2 + H2O = L-tryptophan + formaldehyde + H2O2. Functionally, catalyzes the oxidative demethylation of N-methyl-L-tryptophan. The protein is N-methyl-L-tryptophan oxidase of Salmonella typhimurium (strain LT2 / SGSC1412 / ATCC 700720).